The following is a 430-amino-acid chain: MDAVNENGKRAMKDDSHGNSTSPKRRKSRHISALILARGGSKGIPLKNIKMLAGVPLIGWVIRAAVDSNVFNSVWVSTDHEEIAKVALAWGAKVHKRSPEVSQDSSSSLDTIREFSRQHREVDVICNIQATSPCLHPKHLTEAVELITKQGYDSVFSVVRRHNFRWKEVEKGGDCSTEPMNLNPACRPRRQDWSGELCENGSFYFAKKELIEQGLLQGGKKTYYEMKPEYSVDIDVDIDWPVAEQRVLRFGYFGKDKPEVVRLLLCNVSGCLTDGQIYTSASGEEMVSINIRDQIGISMLKKEGVKVILLETYPIAKALAVRLSERMGCPLLHHMDDKLKEVERIMVEEKLEWKEVAYLGNDEADVKCLELAGLSGVPVDAPTVALNHTKYTCHNAAGHGAVREFAEHILLLKKKAKSQMEQDRICRDAF.

The segment at 1–29 (MDAVNENGKRAMKDDSHGNSTSPKRRKSR) is disordered. The span at 7–17 (NGKRAMKDDSH) shows a compositional bias: basic and acidic residues. The short motif at 9–27 (KRAMKDDSHGNSTSPKRRK) is the Bipartite nuclear localization signal element. Substrate is bound by residues R38, N48, R97, S106, S108, and Q129. R187 is a catalytic residue.

It belongs to the CMP-NeuNAc synthase family. In terms of assembly, homotetramer.

The protein localises to the nucleus. It catalyses the reaction an N-acylneuraminate + CTP = a CMP-N-acyl-beta-neuraminate + diphosphate. It participates in amino-sugar metabolism; N-acetylneuraminate metabolism. Its function is as follows. Catalyzes the activation of N-acetylneuraminic acid (NeuNAc) to cytidine 5'-monophosphate N-acetylneuraminic acid (CMP-NeuNAc), a substrate required for the addition of sialic acid. Also has activity towards N-glycolylneuraminic acid (Neu5Gc). Has weak activity towards 2-keto-3-deoxy-D-glycero-D-galacto-nononic acid (KDN). The chain is N-acylneuraminate cytidylyltransferase A from Danio rerio (Zebrafish).